An 89-amino-acid polypeptide reads, in one-letter code: Small ribosomal subunit protein bS20 (89 aa).

Disordered regions lie at residues 1 to 25 (MANI…ASMK) and 69 to 89 (KNAA…IQAS). Positions 7-20 (AIKRAKTSEKRRAH) are enriched in basic residues.

This sequence belongs to the bacterial ribosomal protein bS20 family.

Functionally, binds directly to 16S ribosomal RNA. This Geobacillus kaustophilus (strain HTA426) protein is Small ribosomal subunit protein bS20.